A 221-amino-acid chain; its full sequence is Large ribosomal subunit protein bL25 (221 aa).

The segment at Ser-174–Glu-221 is disordered. The span at Glu-184–Glu-221 shows a compositional bias: acidic residues.

This sequence belongs to the bacterial ribosomal protein bL25 family. CTC subfamily. As to quaternary structure, part of the 50S ribosomal subunit; part of the 5S rRNA/L5/L18/L25 subcomplex. Contacts the 5S rRNA. Binds to the 5S rRNA independently of L5 and L18.

In terms of biological role, this is one of the proteins that binds to the 5S RNA in the ribosome where it forms part of the central protuberance. The polypeptide is Large ribosomal subunit protein bL25 (Staphylococcus haemolyticus (strain JCSC1435)).